The chain runs to 121 residues: Basic phospholipase A2 VRV-PL-V (121 aa).

7 disulfide bridges follow: C26–C115, C28–C44, C43–C95, C49–C121, C50–C88, C57–C81, and C75–C86. The Ca(2+) site is built by Y27, G29, and G31. H47 is an active-site residue. D48 contacts Ca(2+). Residue D89 is part of the active site.

This sequence belongs to the phospholipase A2 family. Group II subfamily. D49 sub-subfamily. As to quaternary structure, monomer. Requires Ca(2+) as cofactor. Expressed by the venom gland.

The protein localises to the secreted. It catalyses the reaction a 1,2-diacyl-sn-glycero-3-phosphocholine + H2O = a 1-acyl-sn-glycero-3-phosphocholine + a fatty acid + H(+). Snake venom phospholipase A2 (PLA2) that has a low enzymatic activity. PLA2 catalyzes the calcium-dependent hydrolysis of the 2-acyl groups in 3-sn-phosphoglycerides. This is Basic phospholipase A2 VRV-PL-V from Daboia russelii (Russel's viper).